The sequence spans 483 residues: MTKMDIRGAVDAAVPTNIIAAKAAEVRANKVNWQSYLQGQMISAEDCEFIQRFEMKRSPEEKQEMLQTEGSQCAKTFINLMTHICKEQTVQYILTMVDDMLQENHQRVSIFFDYARCSKNTAWPYFLPMLNRQDPFTVHMAARIIAKLAAWGKELMEGSDLNYYFNWIKTQLSSQKLRGSGVAVETGTVSSSDSSQYVQCVAGCLQLMLRVNEYRFAWVEADGVNCIMGVLSNKCGFQLQYQMIFSIWLLAFSPQMCEHLRRYNIIPVLSDILQESVKEKVTRIILAAFRNFLEKSTERETRQEYALAMIQCKVLKQLENLEQQKYDDEDISEDIKFLLEKLGESVQDLSSFDEYSSELKSGRLEWSPVHKSEKFWRENAVRLNEKNYELLKILTKLLEVSDDPQVLAVAAHDVGEYVRHYPRGKRVIEQLGGKQLVMNHMHHEDQQVRYNALLAVQKLMVHNWEYLGKQLQSEQPQTAAARS.

At Ser483 the chain carries Phosphoserine.

Belongs to the V-ATPase H subunit family. V-ATPase is a heteromultimeric enzyme made up of two complexes: the ATP-hydrolytic V1 complex and the proton translocation V0 complex. The V1 complex consists of three catalytic AB heterodimers that form a heterohexamer, three peripheral stalks each consisting of EG heterodimers, one central rotor including subunits D and F, and the regulatory subunits C and H. The proton translocation complex V0 consists of the proton transport subunit a, a ring of proteolipid subunits c9c'', rotary subunit d, subunits e and f, and the accessory subunits ATP6AP1/Ac45 and ATP6AP2/PRR. Interacts with AP2M1. Interacts with TM9SF4 in colon cancer cells. As to quaternary structure, (Microbial infection) Interacts with HIV-1 Nef protein. In terms of assembly, (Microbial infection) Interacts with M.tuberculosis PtpA, which blocks V-ATPase trafficking and phagosome acidification. Widely expressed.

It is found in the cytoplasmic vesicle. Its subcellular location is the clathrin-coated vesicle membrane. Subunit of the V1 complex of vacuolar(H+)-ATPase (V-ATPase), a multisubunit enzyme composed of a peripheral complex (V1) that hydrolyzes ATP and a membrane integral complex (V0) that translocates protons. V-ATPase is responsible for acidifying and maintaining the pH of intracellular compartments and in some cell types, is targeted to the plasma membrane, where it is responsible for acidifying the extracellular environment. Subunit H is essential for V-ATPase activity, but not for the assembly of the complex. Involved in the endocytosis mediated by clathrin-coated pits, required for the formation of endosomes. The chain is V-type proton ATPase subunit H (ATP6V1H) from Homo sapiens (Human).